The sequence spans 1434 residues: MWSLTANEDEDESATAHFFLGAGDEGLGTCGIGMRTGESDSELLEDEEDEVPPEPQIIVGICAMTKKSKSKPMTQILERLCRFDYLTVVILGEDVILNEPVENWPPCHCLISFHSKGFPLDKAVAYSKLRNPFLINDLTMQYYIQDRREVYRILQEEGIDLPRYAVLNRDPACPEECNLIEGEDQVEVNGAVFPKPFVEKPVSAEDHNVYIYYPSSAGGGSQRLFRKIGSRSSVYSPESSVRKTGSYIYEEFMPTDGTDVKVYTVGPDYAHAEARKSPALDGKVERDSEGKEVRYPVMLTAMEKLVARKVCVAFKQTVCGFDLLRANGHSFVCDVNGFSFVKNSMKYYDDCAKILGNTIMRELAPQFQIPWSIPTEAEDIPIVPTTSGTMMELRCVIAIIRHGDRTPKQKMKMEVTHPRFFALFEKHGGYKTGKLKLKRPEQLQEVLDITRLLLAELEKEPGAEIEEKTGKLEQLKSVLEMYGHFSGINRKVQLTYYPHGVKASSEGQDLQREPPAPSLLLVLKWGGELTPDGRVQAEELGRAFRCMYPGGQGDYAGFPGCGLLRLHSTFRHDLKIYASDEGRVQMTAAAFAKGLLALEGELTPILVQMVKSANMNGLLDSDSDSLSSCQHRVKARLHHILQQDAPFGPEDYDQLAPTGSTSLLNSMSVIQNPVKVCDQVFALIENLTHQIRERMQDPSSVDLQLYHSETLELMLQRWSKLERDFRQKSGRYDISKIPDIYDCVKYDVQHNGSLGLQGTAELLRLSKALADVVIPQEYGISREEKVEIAVGFCLPLLRKILLDLQRTHEDESVNKLHPLYSRGVLSPGRHVRTRLYFTSESHVHSLLSVFRYGGLLDETKDAQWQRALAYLSAISELNYMTQIVIMLYEDNTRDPLSEERFHVELHFSPGVKGVEEGSAPAGCGFRPASSENEEMKTDPGSIENLCPAKPSDEPDRALQTSPQPVEGTGLPRRSPLIRNRKAGSMEVLSETSSSRPGGYRLFSSSRPPTEMKQSGLGSQCTGLFSTTVLGGSSSAPNLQDYARTHGKKLPPAGLKHRDELLFVPAVKRFSVSFAKHPTNGFEGCSMVPTIYPLETLHNALSLRQVSEFLTKVCQRHTDAHAQASAALFDSMHNHQASDNPFSPPRTLHSPPLQLRHRSEKPPWYSSGPSSTVSSAGPSSPTTVDGNSHFGFSDQSSVNTQMIEEKQGLGLLQETPGDGTPEFHIELAESTQSPQEPPVEISPPGSQDDTEVNQTCQEVPDTIQPCHDILEEIGQPNQEVPDISQLLLKNHDTATNTCQPCQASQLSKKVYEEICQLCQDNPEESNQLCQEVSVELGRMVHRFPVSIGSTTQETLMEIGRPTQEIPEEPCQEFSEKVGMLTQKASAISELSQDILETDNPSQELSEETDLQAQEVSEEIDQEPEVVDELSNEDIS.

66–67 (KK) is a substrate binding site. Residues R147, K200, H207, R226, 250 to 253 (EEFM), and 259 to 261 (DVK) contribute to the ATP site. 226–227 (RK) contributes to the substrate binding site. Substrate is bound by residues K261 and R275. ATP is bound by residues S277, D322, and 334 to 336 (DVN). Substrate is bound at residue 339 to 342 (SFVK). A polyphosphoinositide-binding domain region spans residues 384 to 455 (PTTSGTMMEL…VLDITRLLLA (72 aa)). The disordered stretch occupies residues 916-1017 (EGSAPAGCGF…PTEMKQSGLG (102 aa)). Residues S941 and S984 each carry the phosphoserine modification. A compositionally biased stretch (polar residues) spans 1002 to 1017 (FSSSRPPTEMKQSGLG). Phosphoserine occurs at positions 1034, 1070, 1142, and 1149. 3 disordered regions span residues 1133–1193 (NHQA…GFSD), 1228–1251 (ESTQ…DTEV), and 1396–1434 (TDNP…EDIS). Positions 1165–1183 (SSGPSSTVSSAGPSSPTTV) are enriched in low complexity. Residues 1403–1434 (LSEETDLQAQEVSEEIDQEPEVVDELSNEDIS) show a composition bias toward acidic residues.

Belongs to the histidine acid phosphatase family. VIP1 subfamily.

The protein resides in the cytoplasm. It is found in the cytosol. The protein localises to the cell membrane. The catalysed reaction is 1D-myo-inositol hexakisphosphate + ATP = 1-diphospho-1D-myo-inositol 2,3,4,5,6-pentakisphosphate + ADP. It carries out the reaction 5-diphospho-1D-myo-inositol 1,2,3,4,6-pentakisphosphate + ATP + H(+) = 1,5-bis(diphospho)-1D-myo-inositol 2,3,4,6-tetrakisphosphate + ADP. Its function is as follows. Bifunctional inositol kinase that acts in concert with the IP6K kinases IP6K1, IP6K2 and IP6K3 to synthesize the diphosphate group-containing inositol pyrophosphates diphosphoinositol pentakisphosphate, PP-InsP5, and bis-diphosphoinositol tetrakisphosphate, (PP)2-InsP4. PP-InsP5 and (PP)2-InsP4, also respectively called InsP7 and InsP8, regulate a variety of cellular processes, including apoptosis, vesicle trafficking, cytoskeletal dynamics, exocytosis, insulin signaling and neutrophil activation. Phosphorylates inositol hexakisphosphate (InsP6) at position 1 to produce PP-InsP5 which is in turn phosphorylated by IP6Ks to produce (PP)2-InsP4. Alternatively, phosphorylates PP-InsP5 at position 1, produced by IP6Ks from InsP6, to produce (PP)2-InsP4. Activated when cells are exposed to hyperosmotic stress. The sequence is that of Inositol hexakisphosphate and diphosphoinositol-pentakisphosphate kinase 1 from Rattus norvegicus (Rat).